A 343-amino-acid chain; its full sequence is Cysteine proteinase 1 (343 aa).

The first 18 residues, methionine 1–serine 18, serve as a signal peptide directing secretion. Residues arginine 19–serine 117 constitute a propeptide, activation peptide. Disulfide bonds link cysteine 139/cysteine 190, cysteine 173/cysteine 224, and cysteine 279/cysteine 332. The active site involves cysteine 142. Active-site residues include histidine 286 and asparagine 311.

The protein belongs to the peptidase C1 family. Post-translationally, phosphoglycosylated, contains GlcNAc-alpha-1-P-Ser residues.

It is found in the lysosome. Cysteine proteinases 1 and 2 are believed to participate in the breakdown of protein during differentiation of Dictyostelium as a response to starvation. The sequence is that of Cysteine proteinase 1 (cprA) from Dictyostelium discoideum (Social amoeba).